A 316-amino-acid polypeptide reads, in one-letter code: Phosphatidylglycerol--prolipoprotein diacylglyceryl transferase (316 aa).

A run of 3 helical transmembrane segments spans residues 18-38, 47-67, and 95-115; these read PIPI…AIWL, GGNP…GIIG, and NGGL…AVFF. An a 1,2-diacyl-sn-glycero-3-phospho-(1'-sn-glycerol)-binding site is contributed by Arg141. 2 helical membrane passes run 188–208 and 251–271; these read VHPT…LLMW and INTI…FLLK. A disordered region spans residues 292-316; the sequence is AVASPDGKPLPKAGEGIDGETPSTR.

This sequence belongs to the Lgt family.

It localises to the cell membrane. The catalysed reaction is L-cysteinyl-[prolipoprotein] + a 1,2-diacyl-sn-glycero-3-phospho-(1'-sn-glycerol) = an S-1,2-diacyl-sn-glyceryl-L-cysteinyl-[prolipoprotein] + sn-glycerol 1-phosphate + H(+). It participates in protein modification; lipoprotein biosynthesis (diacylglyceryl transfer). Functionally, catalyzes the transfer of the diacylglyceryl group from phosphatidylglycerol to the sulfhydryl group of the N-terminal cysteine of a prolipoprotein, the first step in the formation of mature lipoproteins. In Corynebacterium glutamicum (strain ATCC 13032 / DSM 20300 / JCM 1318 / BCRC 11384 / CCUG 27702 / LMG 3730 / NBRC 12168 / NCIMB 10025 / NRRL B-2784 / 534), this protein is Phosphatidylglycerol--prolipoprotein diacylglyceryl transferase.